Here is a 497-residue protein sequence, read N- to C-terminus: Serine hydroxymethyltransferase (497 aa).

(6S)-5,6,7,8-tetrahydrofolate contacts are provided by residues leucine 176 and 180-182; that span reads GHL. Lysine 289 carries the N6-(pyridoxal phosphate)lysine modification.

The protein belongs to the SHMT family. As to quaternary structure, homodimer. The cofactor is pyridoxal 5'-phosphate.

Its subcellular location is the cytoplasm. It catalyses the reaction (6R)-5,10-methylene-5,6,7,8-tetrahydrofolate + glycine + H2O = (6S)-5,6,7,8-tetrahydrofolate + L-serine. It functions in the pathway one-carbon metabolism; tetrahydrofolate interconversion. The protein operates within amino-acid biosynthesis; glycine biosynthesis; glycine from L-serine: step 1/1. Functionally, catalyzes the reversible interconversion of serine and glycine with tetrahydrofolate (THF) serving as the one-carbon carrier. This reaction serves as the major source of one-carbon groups required for the biosynthesis of purines, thymidylate, methionine, and other important biomolecules. Also exhibits THF-independent aldolase activity toward beta-hydroxyamino acids, producing glycine and aldehydes, via a retro-aldol mechanism. The polypeptide is Serine hydroxymethyltransferase (Chlamydia abortus (strain DSM 27085 / S26/3) (Chlamydophila abortus)).